Reading from the N-terminus, the 198-residue chain is Phage-like element PBSX protein XkdA (198 aa).

The protein to B.subtilis YqaB.

This is Phage-like element PBSX protein XkdA (xkdA) from Bacillus subtilis (strain 168).